The chain runs to 317 residues: Methionyl-tRNA formyltransferase (317 aa).

112 to 115 (SILP) is a (6S)-5,6,7,8-tetrahydrofolate binding site.

It belongs to the Fmt family.

It carries out the reaction L-methionyl-tRNA(fMet) + (6R)-10-formyltetrahydrofolate = N-formyl-L-methionyl-tRNA(fMet) + (6S)-5,6,7,8-tetrahydrofolate + H(+). Its function is as follows. Attaches a formyl group to the free amino group of methionyl-tRNA(fMet). The formyl group appears to play a dual role in the initiator identity of N-formylmethionyl-tRNA by promoting its recognition by IF2 and preventing the misappropriation of this tRNA by the elongation apparatus. The protein is Methionyl-tRNA formyltransferase of Actinobacillus succinogenes (strain ATCC 55618 / DSM 22257 / CCUG 43843 / 130Z).